The chain runs to 247 residues: Carboxy-S-adenosyl-L-methionine synthase (247 aa).

S-adenosyl-L-methionine-binding positions include Tyr-40, 65 to 67 (GAS), 90 to 91 (DN), 122 to 123 (DI), Asn-137, and Arg-204.

The protein belongs to the class I-like SAM-binding methyltransferase superfamily. Cx-SAM synthase family. As to quaternary structure, homodimer.

The enzyme catalyses prephenate + S-adenosyl-L-methionine = carboxy-S-adenosyl-L-methionine + 3-phenylpyruvate + H2O. Its function is as follows. Catalyzes the conversion of S-adenosyl-L-methionine (SAM) to carboxy-S-adenosyl-L-methionine (Cx-SAM). The protein is Carboxy-S-adenosyl-L-methionine synthase of Pseudomonas entomophila (strain L48).